Reading from the N-terminus, the 540-residue chain is Ribonuclease Y (540 aa).

The helical transmembrane segment at 4–24 threads the bilayer; the sequence is TILVPVAVAIVSVLVGGCAGY. Positions 230 to 293 constitute a KH domain; the sequence is TVSVVNLPSD…EIAKRALERL (64 aa). One can recognise an HD domain in the interval 356–449; that stretch reads VLSHSIEVGK…VVAADTISSA (94 aa).

It belongs to the RNase Y family.

It is found in the cell membrane. Its function is as follows. Endoribonuclease that initiates mRNA decay. The chain is Ribonuclease Y from Lactobacillus johnsonii (strain CNCM I-12250 / La1 / NCC 533).